Reading from the N-terminus, the 185-residue chain is Putative manganese efflux pump MntP (185 aa).

The next 6 membrane-spanning stretches (helical) occupy residues Leu-4–Ile-24, Ala-36–Ile-56, Ile-65–Ile-85, Val-105–Val-125, Val-130–Phe-150, and Ile-165–Leu-185.

Belongs to the MntP (TC 9.B.29) family.

It is found in the cell membrane. Probably functions as a manganese efflux pump. The protein is Putative manganese efflux pump MntP of Methanoregula boonei (strain DSM 21154 / JCM 14090 / 6A8).